The primary structure comprises 462 residues: Proline--tRNA ligase (462 aa).

Belongs to the class-II aminoacyl-tRNA synthetase family. ProS type 3 subfamily. In terms of assembly, homodimer.

It is found in the cytoplasm. The catalysed reaction is tRNA(Pro) + L-proline + ATP = L-prolyl-tRNA(Pro) + AMP + diphosphate. Catalyzes the attachment of proline to tRNA(Pro) in a two-step reaction: proline is first activated by ATP to form Pro-AMP and then transferred to the acceptor end of tRNA(Pro). In Thermoplasma acidophilum (strain ATCC 25905 / DSM 1728 / JCM 9062 / NBRC 15155 / AMRC-C165), this protein is Proline--tRNA ligase.